The chain runs to 456 residues: 3-isopropylmalate dehydratase large subunit (456 aa).

Cys336, Cys396, and Cys399 together coordinate [4Fe-4S] cluster.

The protein belongs to the aconitase/IPM isomerase family. LeuC type 1 subfamily. As to quaternary structure, heterodimer of LeuC and LeuD. It depends on [4Fe-4S] cluster as a cofactor.

It carries out the reaction (2R,3S)-3-isopropylmalate = (2S)-2-isopropylmalate. The protein operates within amino-acid biosynthesis; L-leucine biosynthesis; L-leucine from 3-methyl-2-oxobutanoate: step 2/4. Functionally, catalyzes the isomerization between 2-isopropylmalate and 3-isopropylmalate, via the formation of 2-isopropylmaleate. This is 3-isopropylmalate dehydratase large subunit from Staphylococcus epidermidis (strain ATCC 12228 / FDA PCI 1200).